We begin with the raw amino-acid sequence, 584 residues long: 2-succinyl-5-enolpyruvyl-6-hydroxy-3-cyclohexene-1-carboxylate synthase (584 aa).

Positions 563-584 are disordered; the sequence is TDAEASHRERERLADRVTGLSV. Residues 566-577 show a composition bias toward basic and acidic residues; the sequence is EASHRERERLAD.

This sequence belongs to the TPP enzyme family. MenD subfamily. As to quaternary structure, homodimer. Requires Mg(2+) as cofactor. It depends on Mn(2+) as a cofactor. The cofactor is thiamine diphosphate.

It carries out the reaction isochorismate + 2-oxoglutarate + H(+) = 5-enolpyruvoyl-6-hydroxy-2-succinyl-cyclohex-3-ene-1-carboxylate + CO2. It participates in quinol/quinone metabolism; 1,4-dihydroxy-2-naphthoate biosynthesis; 1,4-dihydroxy-2-naphthoate from chorismate: step 2/7. Its pathway is quinol/quinone metabolism; menaquinone biosynthesis. Functionally, catalyzes the thiamine diphosphate-dependent decarboxylation of 2-oxoglutarate and the subsequent addition of the resulting succinic semialdehyde-thiamine pyrophosphate anion to isochorismate to yield 2-succinyl-5-enolpyruvyl-6-hydroxy-3-cyclohexene-1-carboxylate (SEPHCHC). The sequence is that of 2-succinyl-5-enolpyruvyl-6-hydroxy-3-cyclohexene-1-carboxylate synthase from Halobacterium salinarum (strain ATCC 29341 / DSM 671 / R1).